Here is a 370-residue protein sequence, read N- to C-terminus: MSSAANEGCVYLFIVVLRLSSFSCVNSFIHSFTRSRTRSSYSLDERSLVSYSIVYVAMNKSSKAFQVPNKVITKEDITPLSRSHTKKADTRGTADGKNTTASAVEATPIIITTARSIDTAGSLSENATEDDGTQNGDLHDDDDDDDLESTLGYSSEPDPLFSPCHQPSFTNSTFSYSADNELPMEENHNKNNFHDSSESSIFLPQIQQSFFFGDNSKSDANNTDFWKEVNGTAEEAICLQETRQRKCSLVALHPGDATTSSNDTLGIEDFIKDDINSAEAMEPSPSSSPSSSLLDNLDYNIKLLCYRDNEGKFTLKKRKFLKNSLRSSSAISKKWKPLSKRDKLLKRAIRRKSGVCQTLSAGFGIGEFML.

The N-terminal stretch at 1-27 (MSSAANEGCVYLFIVVLRLSSFSCVNS) is a signal peptide. N-linked (GlcNAc...) asparagine glycans are attached at residues N59, N98, and N126. Disordered stretches follow at residues 81–101 (SRSH…NTTA) and 123–167 (LSEN…CHQP). A compositionally biased stretch (acidic residues) spans 139 to 148 (HDDDDDDDLE). N-linked (GlcNAc...) asparagine glycans are attached at residues N171, N221, N230, and N262.

This is an uncharacterized protein from Saccharomyces cerevisiae (strain ATCC 204508 / S288c) (Baker's yeast).